A 501-amino-acid polypeptide reads, in one-letter code: MLGRDIESDWIGNYWGRDHSLALNTFSKMSIEKEGVLYQKDFFVPYDGLVEELPEHSIEIPEIMGQDLLNDRLNSVEDVQSSYYGRLMPGLNIDLSMPTFPVSNELPVRLSSPIQMNLSTSMPNPTIEQLHSKTKSYVSQNPVNMVGSLSGSPPTDCHSPGGNSNTCGTLKTRALSLSPVSSDTAAKKKSPSRSGSSSSGIKRPLNSFMLYRRDKQSSIPTNNHQSISRIIGEMWKRETIEEKERYAEMAQRERERHAKEYPDYKFLPRKKKDRSTSGKSPRRRKTFDPSLEQDESKVLRMMLNQISHKKSQSDAEKFKLDQYSWLLSEEGNYDSQKGAFDIICQANTNSSQTGLPHSNQPSEISFIPGIYTAPNSVPLPIFPVKNKVEKVDTHNSLDGYLHTFDNLSDYEFRSLINNHSTPSVNDSRLGTSFNKSCTDSPQSISIYDDIKNLDIFSEKKETPNVSLVPTFDSTIFQDDSAYGYDNFTGIWDDPSYRLPVF.

Over residues 142–153 (PVNMVGSLSGSP) the composition is skewed to polar residues. 2 disordered regions span residues 142 to 205 (PVNM…KRPL) and 246 to 293 (YAEM…SLEQ). Residues 192 to 204 (SRSGSSSSGIKRP) show a composition bias toward low complexity. The HMG box DNA-binding region spans 201–265 (IKRPLNSFML…RHAKEYPDYK (65 aa)). Positions 246-263 (YAEMAQRERERHAKEYPD) are enriched in basic and acidic residues.

Post-translationally, phosphorylated by MAPK2.

The protein localises to the nucleus. This is HMG-box protein STE11 from Pneumocystis carinii.